Consider the following 109-residue polypeptide: MPLYEFTFIAQQGLTQYELEGLVKGLSSLLTKNGAELLKYEYWGLLDFAYTIDKMNKGHYCMIYIKATPSSMDEFKRKVRLNEDILRFLCLKKDKLPKGDSLMIQASQV.

This sequence belongs to the bacterial ribosomal protein bS6 family.

In terms of biological role, binds together with bS18 to 16S ribosomal RNA. The polypeptide is Small ribosomal subunit protein bS6 (Ehrlichia chaffeensis (strain ATCC CRL-10679 / Arkansas)).